The following is a 241-amino-acid chain: MILFPAIDLKDGQCVRLRKGEMDQATVFNDSPADQAAAFALAGCRWIHVVDLNGAFAGRPVNAPAVEAILAAVDLPVQLGGGIRDLAAIDLWLDKGVRRVILGTVALRDPQLVREACKRHPGRIAVGIDARGGMVAVEGWAETSAVSALDLALRFEDAGVAAIVHTDIDRDGLLAGPNLDATAALAERLTTPVIVSGGVASLDDLRAIRARAAAGLEGVISGRALYDGRIDLAEALAVLAD.

The active-site Proton acceptor is the D8. The active-site Proton donor is the D129.

It belongs to the HisA/HisF family.

It localises to the cytoplasm. The enzyme catalyses 1-(5-phospho-beta-D-ribosyl)-5-[(5-phospho-beta-D-ribosylamino)methylideneamino]imidazole-4-carboxamide = 5-[(5-phospho-1-deoxy-D-ribulos-1-ylimino)methylamino]-1-(5-phospho-beta-D-ribosyl)imidazole-4-carboxamide. Its pathway is amino-acid biosynthesis; L-histidine biosynthesis; L-histidine from 5-phospho-alpha-D-ribose 1-diphosphate: step 4/9. This Rhodospirillum rubrum (strain ATCC 11170 / ATH 1.1.1 / DSM 467 / LMG 4362 / NCIMB 8255 / S1) protein is 1-(5-phosphoribosyl)-5-[(5-phosphoribosylamino)methylideneamino] imidazole-4-carboxamide isomerase.